The following is a 38-amino-acid chain: Large ribosomal subunit protein bL36A (38 aa).

It belongs to the bacterial ribosomal protein bL36 family.

This Pectobacterium atrosepticum (strain SCRI 1043 / ATCC BAA-672) (Erwinia carotovora subsp. atroseptica) protein is Large ribosomal subunit protein bL36A.